We begin with the raw amino-acid sequence, 1427 residues long: DNA-directed RNA polymerase subunit beta' (1427 aa).

Positions 66, 68, 81, and 84 each coordinate Zn(2+). Mg(2+) contacts are provided by Asp472, Asp474, and Asp476. Residues Cys815, Cys889, Cys896, and Cys899 each contribute to the Zn(2+) site.

Belongs to the RNA polymerase beta' chain family. As to quaternary structure, the RNAP catalytic core consists of 2 alpha, 1 beta, 1 beta' and 1 omega subunit. When a sigma factor is associated with the core the holoenzyme is formed, which can initiate transcription. Mg(2+) serves as cofactor. Requires Zn(2+) as cofactor.

It catalyses the reaction RNA(n) + a ribonucleoside 5'-triphosphate = RNA(n+1) + diphosphate. DNA-dependent RNA polymerase catalyzes the transcription of DNA into RNA using the four ribonucleoside triphosphates as substrates. The sequence is that of DNA-directed RNA polymerase subunit beta' from Bacteroides fragilis (strain YCH46).